A 321-amino-acid chain; its full sequence is High osmolarity signaling protein SHO1A (321 aa).

Topologically, residues 1–28 are cytoplasmic; sequence MDYNNNRYGGGGGGSKFNLGHIVGDPFS. The chain crosses the membrane as a helical span at residues 29 to 49; it reads LATIAIATAGWLIAFVSSIIA. At 50 to 58 the chain is on the extracellular side; sequence NIDQEYPNY. Asn-57 is a glycosylation site (N-linked (GlcNAc...) asparagine). Residues 59-79 form a helical membrane-spanning segment; that stretch reads SWWALAYMFFVILGVTFAVAA. Residue Asn-80 is a topological domain, cytoplasmic. Residues 81–101 traverse the membrane as a helical segment; that stretch reads AVYTYHVAMVGFLAAGLVFTT. Over 102–116 the chain is Extracellular; the sequence is SSVNSLIYWSDKAKQ. The helical transmembrane segment at 117 to 137 threads the bilayer; it reads AAAAGFILLSMVSIVWIFYFG. Topologically, residues 138–321 are cytoplasmic; that stretch reads SQPTASHRQT…IAPSNYLILL (184 aa). Disordered regions lie at residues 155–181 and 194–261; these read KDHA…AQHP and TSSP…QQPT. Polar residues-rich tracts occupy residues 165-181 and 225-237; these read HMTQ…AQHP and NFSN…PITS. Residues 238 to 249 show a composition bias toward low complexity; sequence QNNPQNQHQQPQ. Over residues 250–261 the composition is skewed to polar residues; it reads DLTSPSTTQQPT. An SH3 domain is found at 262–321; sequence EYPYRAKAIYSYEANPDDANEISFNKHEILEVSDVSGRWWQAKKENGETGIAPSNYLILL.

Belongs to the SHO1 family. Forms homooligomers.

It localises to the cell membrane. Plasma membrane osmosensor that activates the high osmolarity glycerol (HOG) MAPK signaling pathway in response to high osmolarity. The sequence is that of High osmolarity signaling protein SHO1A (SHO1A) from Hortaea werneckii.